A 250-amino-acid chain; its full sequence is DNA repair protein RecO (250 aa).

The protein belongs to the RecO family.

Its function is as follows. Involved in DNA repair and RecF pathway recombination. This is DNA repair protein RecO from Staphylococcus aureus (strain MRSA252).